An 810-amino-acid chain; its full sequence is Protein kinase C-binding protein NELL1 (810 aa).

An N-terminal signal peptide occupies residues 1-21 (MPMDVILVLWFCVCTARTVLG). Residues Asn-40, Asn-53, Asn-83, Asn-224, Asn-294, and Asn-372 are each glycosylated (N-linked (GlcNAc...) asparagine). Positions 57-227 (AFLFQDVQRE…TQCPNLNRTC (171 aa)) constitute a Laminin G-like domain. The region spanning 271–332 (KTCQVSGLLY…ISGQCCKVCR (62 aa)) is the VWFC 1 domain. Intrachain disulfides connect Cys-395–Cys-407, Cys-401–Cys-416, and Cys-418–Cys-432. Positions 434, 435, and 437 each coordinate Ca(2+). Residues 434 to 475 (DIDECAAKMHYCHANTVCVNLPGLYRCDCVPGYIRVDDFSCT) enclose the EGF-like 1; calcium-binding domain. Intrachain disulfides connect Cys-438/Cys-451, Cys-445/Cys-460, Cys-462/Cys-474, Cys-480/Cys-493, Cys-487/Cys-502, Cys-504/Cys-515, Cys-519/Cys-529, Cys-523/Cys-535, Cys-537/Cys-546, Cys-553/Cys-566, Cys-560/Cys-575, Cys-577/Cys-594, Cys-600/Cys-613, Cys-607/Cys-622, and Cys-624/Cys-630. Ca(2+)-binding residues include Asn-453, Leu-454, and Leu-457. Positions 476-516 (EHDDCGSGQHNCDKNAICTNTVQGHSCTCQPGYVGNGTICK) constitute an EGF-like 2; calcium-binding domain. Asn-511 carries an N-linked (GlcNAc...) asparagine glycan. The EGF-like 3 domain maps to 517 to 547 (AFCEEGCRYGGTCVAPNKCVCPSGFTGSHCE). The EGF-like 4; calcium-binding domain maps to 549-587 (DIDECAEGFVECHNHSRCVNLPGWYHCECRSGFHDDGTY). N-linked (GlcNAc...) asparagine glycosylation is present at Asn-562. An EGF-like 5; calcium-binding domain is found at 596 to 631 (DIDECALRTHTCWNDSACINLAGGFDCLCPSGPSCS). N-linked (GlcNAc...) asparagine glycosylation is present at Asn-609. 2 VWFC domains span residues 632-687 (GDCP…PECD) and 692-750 (SQCL…PRCV). Asn-708 carries an N-linked (GlcNAc...) asparagine glycan.

Interacts with ATRAID; the interaction promotes osteoblast cell differentiation and mineralization. Homotrimer. Binds to PKC beta-1. Interacts with ROBO3.

It localises to the cytoplasm. Its subcellular location is the nucleus envelope. It is found in the secreted. In terms of biological role, plays a role in the control of cell growth and differentiation. Promotes osteoblast cell differentiation and terminal mineralization. The sequence is that of Protein kinase C-binding protein NELL1 (Nell1) from Rattus norvegicus (Rat).